A 402-amino-acid chain; its full sequence is Multidrug resistance protein MdtH (402 aa).

A run of 11 helical transmembrane segments spans residues 13–33, 34–54, 99–116, 139–159, 165–185, 214–234, 243–263, 277–297, 300–320, 340–360, and 368–388; these read YFLL…FPLI, SIRF…ALGL, PWVL…GTLF, LLMM…SWLL, LVCG…AWLL, VLTL…LPVM, AAVK…LYPL, LMAG…ASNL, LFTL…ARET, LGLA…FDAG, and LPWA…WWQF.

It belongs to the major facilitator superfamily. DHA1 family. MdtH (TC 2.A.1.2.21) subfamily.

It is found in the cell inner membrane. This chain is Multidrug resistance protein MdtH, found in Cronobacter sakazakii (strain ATCC BAA-894) (Enterobacter sakazakii).